The primary structure comprises 745 residues: uncharacterized protein (745 aa).

The HTH araC/xylS-type domain occupies 158–256; sequence NQVCDYIELH…HQTPKQYRGD (99 aa). 2 DNA-binding regions (H-T-H motif) span residues 175–196 and 223–246; these read SELS…TESL and ITDI…KHFT.

This is an uncharacterized protein from Staphylococcus aureus (strain Mu50 / ATCC 700699).